Here is a 101-residue protein sequence, read N- to C-terminus: Small ribosomal subunit protein uS14 (101 aa).

This sequence belongs to the universal ribosomal protein uS14 family. In terms of assembly, part of the 30S ribosomal subunit. Contacts proteins S3 and S10.

In terms of biological role, binds 16S rRNA, required for the assembly of 30S particles and may also be responsible for determining the conformation of the 16S rRNA at the A site. The sequence is that of Small ribosomal subunit protein uS14 from Buchnera aphidicola subsp. Baizongia pistaciae (strain Bp).